Consider the following 647-residue polypeptide: DNA mismatch repair protein MutL (647 aa).

Belongs to the DNA mismatch repair MutL/HexB family.

Its function is as follows. This protein is involved in the repair of mismatches in DNA. It is required for dam-dependent methyl-directed DNA mismatch repair. May act as a 'molecular matchmaker', a protein that promotes the formation of a stable complex between two or more DNA-binding proteins in an ATP-dependent manner without itself being part of a final effector complex. In Bacillus cereus (strain ATCC 10987 / NRS 248), this protein is DNA mismatch repair protein MutL.